Consider the following 514-residue polypeptide: Peptide chain release factor 3 (514 aa).

A tr-type G domain is found at 8–268; it reads KKRRTFAIIS…IFLKFAPEPH (261 aa). GTP-binding positions include 17–24, 85–89, and 139–142; these read SHPDAGKT, DTPGH, and NKLD.

This sequence belongs to the TRAFAC class translation factor GTPase superfamily. Classic translation factor GTPase family. PrfC subfamily.

Its subcellular location is the cytoplasm. Increases the formation of ribosomal termination complexes and stimulates activities of RF-1 and RF-2. It binds guanine nucleotides and has strong preference for UGA stop codons. It may interact directly with the ribosome. The stimulation of RF-1 and RF-2 is significantly reduced by GTP and GDP, but not by GMP. The polypeptide is Peptide chain release factor 3 (Streptococcus pneumoniae (strain CGSP14)).